The following is a 473-amino-acid chain: tRNA-2-methylthio-N(6)-dimethylallyladenosine synthase (473 aa).

Positions 5–125 constitute an MTTase N-terminal domain; sequence RKLHIKSYGC…LPQLLARADQ (121 aa). [4Fe-4S] cluster is bound by residues C14, C50, C88, C166, C170, and C173. Residues 152-384 enclose the Radical SAM core domain; that stretch reads RARGISAFVT…QQLIDSQQSA (233 aa). Positions 387 to 459 constitute a TRAM domain; it reads KAAIGQTVDV…RYSLLGELAA (73 aa).

It belongs to the methylthiotransferase family. MiaB subfamily. Monomer. [4Fe-4S] cluster is required as a cofactor.

It localises to the cytoplasm. It catalyses the reaction N(6)-dimethylallyladenosine(37) in tRNA + (sulfur carrier)-SH + AH2 + 2 S-adenosyl-L-methionine = 2-methylsulfanyl-N(6)-dimethylallyladenosine(37) in tRNA + (sulfur carrier)-H + 5'-deoxyadenosine + L-methionine + A + S-adenosyl-L-homocysteine + 2 H(+). Catalyzes the methylthiolation of N6-(dimethylallyl)adenosine (i(6)A), leading to the formation of 2-methylthio-N6-(dimethylallyl)adenosine (ms(2)i(6)A) at position 37 in tRNAs that read codons beginning with uridine. The protein is tRNA-2-methylthio-N(6)-dimethylallyladenosine synthase of Rhodopseudomonas palustris (strain BisB5).